A 710-amino-acid polypeptide reads, in one-letter code: Lactotransferrin (710 aa).

An N-terminal signal peptide occupies residues 1–19 (MKLVFLVLLFLGALGLCLA). The residue at position 10 (phenylalanine 10) is a Phosphoserine; alternate. An O-linked (GlcNAc) serine; alternate glycan is attached at phenylalanine 10. Residues 20-24 (GRRRS) are critical for glycosaminoglycan, lipid A, lysozyme and DNA binding. Bactericidal and antifungal activity regions lie at residues 20–29 (GRRRSVQWCA) and 39–49 (FQWQRNMRKVR). Residues 21 to 22 (RR) are important for full bactericidal and antifungal activities. Transferrin-like domains lie at 25–352 (VQWC…NLRK) and 364–695 (VVWC…NLKK). Intrachain disulfides connect cysteine 28-cysteine 64 and cysteine 38-cysteine 55. Interaction with PspA stretches follow at residues 39–46 (FQWQRNMR) and 57–58 (KR). The interval 39–49 (FQWQRNMRKVR) is interaction with lipopolysaccharide. The interval 46–51 (RKVRGP) is involved in glycosaminoglycan binding. Aspartate 79 contributes to the Fe(3+) binding site. Lysine 92 is a catalytic residue. Position 111 (tyrosine 111) interacts with Fe(3+). 4 disulfides stabilise this stretch: cysteine 134-cysteine 217, cysteine 176-cysteine 192, cysteine 189-cysteine 200, and cysteine 250-cysteine 264. Hydrogencarbonate contacts are provided by threonine 136, arginine 140, alanine 142, and glycine 143. N-linked (GlcNAc...) asparagine glycosylation is present at asparagine 156. Tyrosine 211 lines the Fe(3+) pocket. Histidine 272 is a Fe(3+) binding site. Serine 278 functions as the Nucleophile in the catalytic mechanism. Intrachain disulfides connect cysteine 367–cysteine 399 and cysteine 377–cysteine 390. Residues glutamine 379 and serine 391 each participate in a glycyl lysine isopeptide (Lys-Gly) (interchain with G-Cter in ubiquitin) cross-link. Residues aspartate 414 and tyrosine 454 each coordinate Fe(3+). 8 cysteine pairs are disulfide-bonded: cysteine 424/cysteine 705, cysteine 446/cysteine 668, cysteine 478/cysteine 553, cysteine 502/cysteine 696, cysteine 512/cysteine 526, cysteine 523/cysteine 536, cysteine 594/cysteine 608, and cysteine 646/cysteine 651. Residues threonine 480, arginine 484, alanine 486, and glycine 487 each coordinate hydrogencarbonate. Residue asparagine 497 is glycosylated (N-linked (GlcNAc...) asparagine). Tyrosine 547 lines the Fe(3+) pocket. Residue histidine 616 coordinates Fe(3+). N-linked (GlcNAc...) asparagine glycosylation occurs at asparagine 642.

It belongs to the transferrin family. As to quaternary structure, monomer. Found in a complex with LTF, CLU, EPPIN and SEMG1. Found in a complex with MPO and LTF; interacts directly with CP, allows Fe(3+) incorporation into LTF and activation of CP ferroxidase activity. In terms of processing, phosphorylation at Ser-10 activates the transcriptional activity. Phosphorylation at Ser-10 also promotes proteasomal degradation. Alternatively can undergo O-GlcNAcylation at Ser-10. O-GlcNAcylation at Ser-10 inhibits DNA binding and negatively regulates the transcriptional activity. Alternatively can undergo phosphorylation at Ser-10. Post-translationally, poly-N-acetyllactosaminic carbohydrate moiety seems to be needed for TLR4 activation. In terms of tissue distribution, high levels are found in saliva and tears, intermediate levels in serum and plasma, and low levels in urine. In kidney, detected in the distal collecting tubules in the medulla but not in the cortical region or in blood vessels. Detected in peripheral blood neutrophils (at protein level). Isoform 1 and isoform DeltaLf are expressed in breast, prostate, spleen, pancreas, kidney, small intestine, lung, skeletal muscle, uterus, thymus and fetal liver. Isoform 1 is expressed in brain, testis and peripheral blood leukocytes; isoform DeltaLf is barely detectable in these tissues. Isoform DeltaLf is expressed in placenta, liver and ovary; isoform 1 is barely detectable in these tissues. In kidney, isoform 1 is expressed at high levels in the collecting tubules of the medulla but at very low levels in the cortex.

It localises to the secreted. The protein localises to the cytoplasmic granule. The protein resides in the cytoplasm. Its subcellular location is the nucleus. Its function is as follows. Transferrins are iron binding transport proteins which can bind two Fe(3+) ions in association with the binding of an anion, usually bicarbonate. Functionally, major iron-binding and multifunctional protein found in exocrine fluids such as breast milk and mucosal secretions. Has antimicrobial activity, which depends on the extracellular cation concentration. Antimicrobial properties include bacteriostasis, which is related to its ability to sequester free iron and thus inhibit microbial growth, as well as direct bactericidal properties leading to the release of lipopolysaccharides from the bacterial outer membrane. Can also prevent bacterial biofilm development in P.aeruginosa infection. Has weak antifungal activity against C.albicans. Has anabolic, differentiating and anti-apoptotic effects on osteoblasts and can also inhibit osteoclastogenesis, possibly playing a role in the regulation of bone growth. Promotes binding of species C adenoviruses to epithelial cells, promoting adenovirus infection. Can inhibit papillomavirus infections. Stimulates the TLR4 signaling pathway leading to NF-kappa-B activation and subsequent pro-inflammatory cytokine production while also interfering with the lipopolysaccharide (LPS)-stimulated TLR4 signaling. Inhibits neutrophil granulocyte migration to sites of apoptosis, when secreted by apoptotic cells. Stimulates VEGFA-mediated endothelial cell migration and proliferation. Binds heparin, chondroitin sulfate and possibly other glycosaminoglycans (GAGs). Also binds specifically to pneumococcal surface protein A (PspA), the lipid A portion of bacterial lipopolysaccharide (LPS), lysozyme and DNA. Lactoferricin binds to the bacterial surface and is crucial for the bactericidal functions. Has some antiviral activity against papillomavirus infection. N-terminal region shows strong antifungal activity against C.albicans. Contains two BBXB heparin-binding consensus sequences that appear to form the predominate functional GAG-binding site. In terms of biological role, has antimicrobial activity and is able to permeabilize different ions through liposomal membranes. Its function is as follows. Has opioid antagonist activity. Shows preference for mu-receptor. Functionally, has opioid antagonist activity. Shows higher degrees of preference for kappa-receptors than for mu-receptors. The lactotransferrin transferrin-like domain 1 functions as a serine protease of the peptidase S60 family that cuts arginine rich regions. This function contributes to the antimicrobial activity. Shows a preferential cleavage at -Arg-Ser-Arg-Arg-|- and -Arg-Arg-Ser-Arg-|-, and of Z-Phe-Arg-|-aminomethylcoumarin sites. In terms of biological role, transcription factor with antiproliferative properties and ability to induce cell cycle arrest. Binds to the DeltaLf response element found in the SKP1, BAX, DCPS, and SELENOH promoters. This Homo sapiens (Human) protein is Lactotransferrin.